Here is an 83-residue protein sequence, read N- to C-terminus: Small ribosomal subunit protein bS16 (83 aa).

Belongs to the bacterial ribosomal protein bS16 family.

This Stutzerimonas stutzeri (strain A1501) (Pseudomonas stutzeri) protein is Small ribosomal subunit protein bS16.